We begin with the raw amino-acid sequence, 161 residues long: Allophycocyanin alpha chain (161 aa).

An N4-methylasparagine modification is found at asparagine 71. Cysteine 81 serves as a coordination point for (2R,3E)-phycocyanobilin.

This sequence belongs to the phycobiliprotein family. Heterodimer of an alpha and a beta chain. Contains one covalently linked phycocyanobilin chromophore.

It localises to the plastid. It is found in the chloroplast thylakoid membrane. Functionally, light-harvesting photosynthetic bile pigment-protein from the phycobiliprotein complex. Allophycocyanin has a maximum absorption at approximately 650 nanometers. In Porphyra purpurea (Red seaweed), this protein is Allophycocyanin alpha chain (apcA).